Here is a 320-residue protein sequence, read N- to C-terminus: 1-aminocyclopropane-1-carboxylate oxidase 3 (320 aa).

Residues 153–253 (PNFGTKVSNY…RMSLASFYNP (101 aa)) form the Fe2OG dioxygenase domain. Positions 177, 179, and 234 each coordinate Fe cation.

Belongs to the iron/ascorbate-dependent oxidoreductase family. Requires Fe cation as cofactor.

The enzyme catalyses 1-aminocyclopropane-1-carboxylate + L-ascorbate + O2 = ethene + L-dehydroascorbate + hydrogen cyanide + CO2 + 2 H2O. The protein operates within alkene biosynthesis; ethylene biosynthesis via S-adenosyl-L-methionine; ethylene from S-adenosyl-L-methionine: step 2/2. The protein is 1-aminocyclopropane-1-carboxylate oxidase 3 (ACO3) of Petunia hybrida (Petunia).